We begin with the raw amino-acid sequence, 91 residues long: Early E3B 10.4 kDa protein (91 aa).

A signal peptide spans 1 to 22; sequence MIPRNFFFTILICAFNVCATFT. At 23 to 34 the chain is on the lumenal side; sequence AVATASPDCIGP. A helical transmembrane segment spans residues 35 to 60; sequence FASYALFAFVTCICVCSIVCLVINFF. The Cytoplasmic segment spans residues 61–91; it reads QLVDWIFVRIAYLRHHPEYRNQNVAALLRLI.

Belongs to the adenoviridae E3B family.

The protein resides in the host endoplasmic reticulum membrane. Functionally, down-regulates the EGF receptor. This chain is Early E3B 10.4 kDa protein, found in Homo sapiens (Human).